We begin with the raw amino-acid sequence, 355 residues long: Peptide chain release factor 1 (355 aa).

The residue at position 233 (glutamine 233) is an N5-methylglutamine. The disordered stretch occupies residues 280-310 (ERRKKEQKRANNRRGQVGSGDRSERIRTYNF).

The protein belongs to the prokaryotic/mitochondrial release factor family. Methylated by PrmC. Methylation increases the termination efficiency of RF1.

It localises to the cytoplasm. Its function is as follows. Peptide chain release factor 1 directs the termination of translation in response to the peptide chain termination codons UAG and UAA. This chain is Peptide chain release factor 1, found in Rickettsia canadensis (strain McKiel).